The sequence spans 436 residues: Xylose isomerase (436 aa).

Active-site residues include His100 and Asp103. Mg(2+) contacts are provided by Glu231, Glu267, His270, Asp295, Asp306, Asp308, and Asp338.

This sequence belongs to the xylose isomerase family. Homotetramer. Mg(2+) is required as a cofactor.

Its subcellular location is the cytoplasm. The enzyme catalyses alpha-D-xylose = alpha-D-xylulofuranose. This chain is Xylose isomerase, found in Agrobacterium fabrum (strain C58 / ATCC 33970) (Agrobacterium tumefaciens (strain C58)).